Consider the following 199-residue polypeptide: Imidazole glycerol phosphate synthase subunit HisH 2 (199 aa).

The Glutamine amidotransferase type-1 domain maps to 1 to 199; the sequence is MIAVIDVSGN…NNFLSLESTC (199 aa). C76 (nucleophile) is an active-site residue. Residues H177 and E179 contribute to the active site.

Heterodimer of HisH and HisF.

The protein resides in the cytoplasm. It catalyses the reaction 5-[(5-phospho-1-deoxy-D-ribulos-1-ylimino)methylamino]-1-(5-phospho-beta-D-ribosyl)imidazole-4-carboxamide + L-glutamine = D-erythro-1-(imidazol-4-yl)glycerol 3-phosphate + 5-amino-1-(5-phospho-beta-D-ribosyl)imidazole-4-carboxamide + L-glutamate + H(+). The enzyme catalyses L-glutamine + H2O = L-glutamate + NH4(+). It functions in the pathway amino-acid biosynthesis; L-histidine biosynthesis; L-histidine from 5-phospho-alpha-D-ribose 1-diphosphate: step 5/9. IGPS catalyzes the conversion of PRFAR and glutamine to IGP, AICAR and glutamate. The HisH subunit provides the glutamine amidotransferase activity that produces the ammonia necessary to HisF for the synthesis of IGP and AICAR. In Legionella pneumophila subsp. pneumophila (strain Philadelphia 1 / ATCC 33152 / DSM 7513), this protein is Imidazole glycerol phosphate synthase subunit HisH 2.